The chain runs to 125 residues: Fluoride-specific ion channel FluC (125 aa).

Helical transmembrane passes span 5–25 (LLVA…GALV), 29–49 (LGAG…FLIG), 66–86 (LFLA…SYET), and 95–115 (VGKA…LAFL). Na(+)-binding residues include Gly-74 and Thr-77.

This sequence belongs to the fluoride channel Fluc/FEX (TC 1.A.43) family.

The protein localises to the cell inner membrane. It carries out the reaction fluoride(in) = fluoride(out). With respect to regulation, na(+) is not transported, but it plays an essential structural role and its presence is essential for fluoride channel function. Its function is as follows. Fluoride-specific ion channel. Important for reducing fluoride concentration in the cell, thus reducing its toxicity. The protein is Fluoride-specific ion channel FluC of Thermus thermophilus (strain ATCC 27634 / DSM 579 / HB8).